We begin with the raw amino-acid sequence, 172 residues long: Shikimate kinase (172 aa).

11-16 lines the ATP pocket; that stretch reads GAGKST. Residue serine 15 participates in Mg(2+) binding. Substrate-binding residues include aspartate 33, arginine 57, and glycine 79. An ATP-binding site is contributed by arginine 117. Arginine 136 is a binding site for substrate. Arginine 153 serves as a coordination point for ATP.

This sequence belongs to the shikimate kinase family. As to quaternary structure, monomer. It depends on Mg(2+) as a cofactor.

Its subcellular location is the cytoplasm. It catalyses the reaction shikimate + ATP = 3-phosphoshikimate + ADP + H(+). It functions in the pathway metabolic intermediate biosynthesis; chorismate biosynthesis; chorismate from D-erythrose 4-phosphate and phosphoenolpyruvate: step 5/7. In terms of biological role, catalyzes the specific phosphorylation of the 3-hydroxyl group of shikimic acid using ATP as a cosubstrate. The polypeptide is Shikimate kinase (Pseudomonas aeruginosa (strain LESB58)).